The chain runs to 124 residues: Phosphoribosyl-AMP cyclohydrolase (124 aa).

Asp82 is a binding site for Mg(2+). Residue Cys83 participates in Zn(2+) binding. Residues Asp84 and Asp86 each contribute to the Mg(2+) site. 2 residues coordinate Zn(2+): Cys99 and Cys106.

The protein belongs to the PRA-CH family. Homodimer. Mg(2+) serves as cofactor. Zn(2+) is required as a cofactor.

It is found in the cytoplasm. It carries out the reaction 1-(5-phospho-beta-D-ribosyl)-5'-AMP + H2O = 1-(5-phospho-beta-D-ribosyl)-5-[(5-phospho-beta-D-ribosylamino)methylideneamino]imidazole-4-carboxamide. It participates in amino-acid biosynthesis; L-histidine biosynthesis; L-histidine from 5-phospho-alpha-D-ribose 1-diphosphate: step 3/9. Functionally, catalyzes the hydrolysis of the adenine ring of phosphoribosyl-AMP. This is Phosphoribosyl-AMP cyclohydrolase from Rhizorhabdus wittichii (strain DSM 6014 / CCUG 31198 / JCM 15750 / NBRC 105917 / EY 4224 / RW1) (Sphingomonas wittichii).